The primary structure comprises 858 residues: Potassium channel KOR1 (858 aa).

The segment at methionine 1–glutamate 41 is disordered. The Cytoplasmic segment spans residues methionine 1–threonine 102. The segment covering glutamate 27–glutamate 41 has biased composition (acidic residues). A helical transmembrane segment spans residues arginine 103 to phenylalanine 123. Residues arginine 124 to leucine 130 are Extracellular-facing. A helical membrane pass occupies residues phenylalanine 131–valine 151. The Cytoplasmic portion of the chain corresponds to alanine 152 to lysine 174. The chain crosses the membrane as a helical span at residues serine 175 to glycine 195. Topologically, residues serine 196 to arginine 201 are extracellular. Residues tyrosine 202–glutamate 222 traverse the membrane as a helical; Voltage-sensor segment. Over lysine 223 to lysine 236 the chain is Cytoplasmic. Residues leucine 237–threonine 257 traverse the membrane as a helical segment. At threonine 258–methionine 292 the chain is on the extracellular side. The segment at residues threonine 293–alanine 312 is an intramembrane region (pore-forming). At valine 313–arginine 316 the chain is on the extracellular side. The helical transmembrane segment at glutamate 317–glycine 337 threads the bilayer. The Cytoplasmic portion of the chain corresponds to asparagine 338–glutamine 858. Leucine 419 to serine 539 is an a nucleoside 3',5'-cyclic phosphate binding site. 6 ANK repeats span residues lysine 559–asparagine 592, aspartate 596–leucine 625, phenylalanine 629–leucine 658, asparagine 660–alanine 689, aspartate 693–alanine 722, and tryptophan 726–arginine 756. The KHA domain occupies arginine 772–glutamine 858.

This sequence belongs to the potassium channel family. Plant (TC 1.A.1.4) subfamily.

It is found in the membrane. In terms of biological role, probable outward-rectifying potassium channel. This Oryza sativa subsp. japonica (Rice) protein is Potassium channel KOR1.